A 239-amino-acid polypeptide reads, in one-letter code: Large ribosomal subunit protein uL2 (239 aa).

The segment at 200–239 (VNHPHGGKEHHIGRPSTVSRRAPPGRKVGHIAARRTGRRK) is disordered. Residues 222-239 (PPGRKVGHIAARRTGRRK) show a composition bias toward basic residues.

Belongs to the universal ribosomal protein uL2 family. In terms of assembly, part of the 50S ribosomal subunit. Forms a bridge to the 30S subunit in the 70S ribosome.

One of the primary rRNA binding proteins. Required for association of the 30S and 50S subunits to form the 70S ribosome, for tRNA binding and peptide bond formation. It has been suggested to have peptidyltransferase activity; this is somewhat controversial. Makes several contacts with the 16S rRNA in the 70S ribosome. This chain is Large ribosomal subunit protein uL2, found in Thermococcus kodakarensis (strain ATCC BAA-918 / JCM 12380 / KOD1) (Pyrococcus kodakaraensis (strain KOD1)).